A 255-amino-acid polypeptide reads, in one-letter code: tRNA (guanine-N(1)-)-methyltransferase (255 aa).

S-adenosyl-L-methionine-binding positions include G113 and 133 to 138 (VGDFVL).

The protein belongs to the RNA methyltransferase TrmD family. As to quaternary structure, homodimer.

Its subcellular location is the cytoplasm. The enzyme catalyses guanosine(37) in tRNA + S-adenosyl-L-methionine = N(1)-methylguanosine(37) in tRNA + S-adenosyl-L-homocysteine + H(+). Specifically methylates guanosine-37 in various tRNAs. This Francisella philomiragia subsp. philomiragia (strain ATCC 25017 / CCUG 19701 / FSC 153 / O#319-036) protein is tRNA (guanine-N(1)-)-methyltransferase.